A 142-amino-acid chain; its full sequence is Protein archease (142 aa).

Residues aspartate 12, aspartate 141, and isoleucine 142 each coordinate Ca(2+).

It belongs to the archease family.

Functionally, activates the tRNA-splicing ligase complex by facilitating the enzymatic turnover of catalytic subunit RtcB. Acts by promoting the guanylylation of RtcB, a key intermediate step in tRNA ligation. Can also alter the NTP specificity of RtcB such that ATP, dGTP or ITP is used efficiently. The sequence is that of Protein archease from Pyrococcus furiosus (strain ATCC 43587 / DSM 3638 / JCM 8422 / Vc1).